A 352-amino-acid chain; its full sequence is C-C chemokine receptor type 5 (352 aa).

The Extracellular segment spans residues 1-30 (MDYQVSSPIYDIDYGPSEPCRKIDVKQMGA). The residue at position 3 (tyrosine 3) is a Sulfotyrosine. O-linked (GalNAc...) serine glycans are attached at residues serine 6 and serine 7. A sulfotyrosine mark is found at tyrosine 10 and tyrosine 14. 2 disulfide bridges follow: cysteine 20/cysteine 269 and cysteine 101/cysteine 178. The helical transmembrane segment at 31 to 58 (QLLPPLYSLVFLFGFVGNMLVVLILINC) threads the bilayer. The Cytoplasmic segment spans residues 59–68 (KRLKSMTDIY). Residues 69–89 (LLNLAISDLLFLFTIPFWAHY) traverse the membrane as a helical segment. The Extracellular segment spans residues 90–102 (AAGQWDFGNTMCQ). The chain crosses the membrane as a helical span at residues 103–124 (FLTALYFIGFFSGIFFIILLTI). At 125-141 (DRYLAIVHAVFALKART) the chain is on the cytoplasmic side. The chain crosses the membrane as a helical span at residues 142–166 (VTFGVVTSVITWVVAVFASLPGIIF). The Extracellular portion of the chain corresponds to 167–198 (TRSQKEGYHYSCSPHFPFSQYRFWKNFETLKM). Residues 199–218 (VILGLVLPLLVMVICYSGIL) traverse the membrane as a helical segment. At 219–235 (KTLLRCRNEKKRHRAVR) the chain is on the cytoplasmic side. Residues 236–260 (LIFTIMIVYFLFWAPYNIVLLINTY) traverse the membrane as a helical segment. Residues 261 to 277 (PDFFGVNNCNSSNRLDQ) lie on the Extracellular side of the membrane. A helical membrane pass occupies residues 278–301 (AMQVTETLGMTHCCVNPIIYAFVG). Residues 302 to 352 (EKFRNYLVIFFQKHIAKRFCKCCSIFQKEAPERANSVYTRSTGEQEISVGL) lie on the Cytoplasmic side of the membrane. 3 S-palmitoyl cysteine lipidation sites follow: cysteine 321, cysteine 323, and cysteine 324. Phosphoserine; by BARK1 occurs at positions 337, 342, and 349.

It belongs to the G-protein coupled receptor 1 family. Interacts with PRAF2. Efficient ligand binding to CCL3/MIP-1alpha and CCL4/MIP-1beta requires sulfation, O-glycosylation and sialic acid modifications. Glycosylation on Ser-6 is required for efficient binding of CCL4. Interacts with GRK2. Interacts with ARRB1 and ARRB2. Interacts with CNIH4. Interacts with S100A4; this interaction stimulates T-lymphocyte chemotaxis. Post-translationally, sulfated on at least 2 of the N-terminal tyrosines. Sulfation is required for efficient binding of the chemokines, CCL3 and CCL4. Palmitoylation in the C-terminal is important for cell surface expression. In terms of processing, phosphorylation on serine residues in the C-terminal is stimulated by binding CC chemokines especially by APO-RANTES. Post-translationally, O-glycosylated, but not N-glycosylated. Ser-6 appears to be the major site even if Ser-7 may be also O-glycosylated. Also sialylated glycans present which contribute to chemokine binding. Ser-17 may also be glycosylated and, if so, with small moieties such as a T-antigen.

The protein localises to the cell membrane. In terms of biological role, receptor for a number of inflammatory CC-chemokines including CCL3/MIP-1-alpha, CCL4/MIP-1-beta and RANTES and subsequently transduces a signal by increasing the intracellular calcium ion level. May play a role in the control of granulocytic lineage proliferation or differentiation. Participates in T-lymphocyte migration to the infection site by acting as a chemotactic receptor. In Saimiri sciureus (Common squirrel monkey), this protein is C-C chemokine receptor type 5 (CCR5).